Here is a 305-residue protein sequence, read N- to C-terminus: Heterogeneous nuclear ribonucleoprotein A0 (305 aa).

Methionine 1 carries the N-acetylmethionine modification. Residues 7–86 (CKLFIGGLNV…VELKRAVSRE (80 aa)) enclose the RRM 1 domain. At serine 68 the chain carries Phosphoserine. Lysine 80 participates in a covalent cross-link: Glycyl lysine isopeptide (Lys-Gly) (interchain with G-Cter in SUMO2). The residue at position 84 (serine 84) is a Phosphoserine; by MAPKAPK2. Glycyl lysine isopeptide (Lys-Gly) (interchain with G-Cter in SUMO2) cross-links involve residues lysine 96, lysine 98, lysine 99, and lysine 106. An RRM 2 domain is found at 98-175 (KKLFVGGLKG…HRVEVKKAVP (78 aa)). At lysine 133 the chain carries N6-acetyllysine. Arginine 139 is subject to Omega-N-methylarginine. Residues lysine 154, lysine 159, lysine 172, and lysine 176 each participate in a glycyl lysine isopeptide (Lys-Gly) (interchain with G-Cter in SUMO2) cross-link. Disordered regions lie at residues 174–214 (VPKE…KGGG) and 262–305 (QSSY…GSSF). Composition is skewed to gly residues over residues 181–200 (SGGG…GRGR) and 269–281 (KSGG…GSSW). The residue at position 188 (serine 188) is a Phosphoserine. At arginine 284 the chain carries Omega-N-methylarginine. The span at 290-305 (YRGGYGGGGGYGGSSF) shows a compositional bias: gly residues. Position 291 is an asymmetric dimethylarginine; alternate (arginine 291). At arginine 291 the chain carries Dimethylated arginine; alternate. Arginine 291 is subject to Omega-N-methylarginine; alternate.

Post-translationally, phosphorylated at Ser-84 by MAPKAPK2 in response to LPS treatment, promoting stabilization of GADD45A mRNA. In terms of processing, arg-291 is dimethylated, probably to asymmetric dimethylarginine.

Its subcellular location is the nucleus. MRNA-binding component of ribonucleosomes. Specifically binds AU-rich element (ARE)-containing mRNAs. Involved in post-transcriptional regulation of cytokines mRNAs. The chain is Heterogeneous nuclear ribonucleoprotein A0 (HNRNPA0) from Homo sapiens (Human).